The following is a 187-amino-acid chain: Adenylate kinase (187 aa).

11-16 (GAGKGT) is an ATP binding site. The interval 31 to 60 (STGDILREAVKNQTAMGIEAKRYMDAGDLV) is NMP. AMP contacts are provided by residues threonine 32, arginine 37, 58–60 (DLV), 86–89 (GFPR), and glutamine 93. The segment at 127–137 (GRAEIEGRADD) is LID. Arginine 128 contacts ATP. Arginine 134 and arginine 145 together coordinate AMP. Glycine 173 is a binding site for ATP.

This sequence belongs to the adenylate kinase family. In terms of assembly, monomer.

The protein localises to the cytoplasm. The enzyme catalyses AMP + ATP = 2 ADP. Its pathway is purine metabolism; AMP biosynthesis via salvage pathway; AMP from ADP: step 1/1. Its function is as follows. Catalyzes the reversible transfer of the terminal phosphate group between ATP and AMP. Plays an important role in cellular energy homeostasis and in adenine nucleotide metabolism. This chain is Adenylate kinase, found in Leptospira interrogans serogroup Icterohaemorrhagiae serovar copenhageni (strain Fiocruz L1-130).